A 79-amino-acid polypeptide reads, in one-letter code: MKSLVIVFVVLLGVAMISANEEELLAILQDQRNDARGGCVNKYKRNICGTLVTPMNCIAPRTRMGKFARRFCKFMCGFC.

The signal sequence occupies residues 1-19; it reads MKSLVIVFVVLLGVAMISA. A propeptide spanning residues 20–36 is cleaved from the precursor; it reads NEEELLAILQDQRNDAR.

The protein belongs to the sea anemone 8 toxin family.

The protein resides in the secreted. It localises to the nematocyst. This is U-actitoxin-Avd8b from Anemonia viridis (Snakelocks anemone).